Consider the following 197-residue polypeptide: Phosphoheptose isomerase (197 aa).

The SIS domain maps to methionine 34 to proline 192. Substrate is bound by residues asparagine 49–glycine 51, glutamine 62, asparagine 91–aspartate 92, serine 122, and histidine 172. Glutamine 62 lines the Zn(2+) pocket. Zn(2+) contacts are provided by histidine 172 and histidine 180.

Belongs to the SIS family. GmhA subfamily. Homotetramer. Requires Zn(2+) as cofactor.

It localises to the cytoplasm. It catalyses the reaction 2 D-sedoheptulose 7-phosphate = D-glycero-alpha-D-manno-heptose 7-phosphate + D-glycero-beta-D-manno-heptose 7-phosphate. Its pathway is carbohydrate biosynthesis; D-glycero-D-manno-heptose 7-phosphate biosynthesis; D-glycero-alpha-D-manno-heptose 7-phosphate and D-glycero-beta-D-manno-heptose 7-phosphate from sedoheptulose 7-phosphate: step 1/1. Functionally, catalyzes the isomerization of sedoheptulose 7-phosphate in D-glycero-D-manno-heptose 7-phosphate. The polypeptide is Phosphoheptose isomerase (Pseudoalteromonas atlantica (strain T6c / ATCC BAA-1087)).